We begin with the raw amino-acid sequence, 535 residues long: CTP synthase (535 aa).

Positions 1 to 268 (MKTKYIFVTG…DSLVCKKLEL (268 aa)) are amidoligase domain. S14 serves as a coordination point for CTP. S14 serves as a coordination point for UTP. 15–20 (SLGKGI) lines the ATP pocket. Y55 lines the L-glutamine pocket. An ATP-binding site is contributed by D72. Mg(2+) is bound by residues D72 and E142. Residues 149–151 (DIE), 189–194 (KTKPTQ), and K225 each bind CTP. UTP contacts are provided by residues 189–194 (KTKPTQ) and K225. One can recognise a Glutamine amidotransferase type-1 domain in the interval 293–535 (TIGLVGKYVE…IKVACTVKEK (243 aa)). An L-glutamine-binding site is contributed by G355. The active-site Nucleophile; for glutamine hydrolysis is C382. L-glutamine is bound by residues 383-386 (LGMQ), E406, and R463. Residues H508 and E510 contribute to the active site.

It belongs to the CTP synthase family. As to quaternary structure, homotetramer.

It catalyses the reaction UTP + L-glutamine + ATP + H2O = CTP + L-glutamate + ADP + phosphate + 2 H(+). It carries out the reaction L-glutamine + H2O = L-glutamate + NH4(+). The enzyme catalyses UTP + NH4(+) + ATP = CTP + ADP + phosphate + 2 H(+). The protein operates within pyrimidine metabolism; CTP biosynthesis via de novo pathway; CTP from UDP: step 2/2. Allosterically activated by GTP, when glutamine is the substrate; GTP has no effect on the reaction when ammonia is the substrate. The allosteric effector GTP functions by stabilizing the protein conformation that binds the tetrahedral intermediate(s) formed during glutamine hydrolysis. Inhibited by the product CTP, via allosteric rather than competitive inhibition. Catalyzes the ATP-dependent amination of UTP to CTP with either L-glutamine or ammonia as the source of nitrogen. Regulates intracellular CTP levels through interactions with the four ribonucleotide triphosphates. The chain is CTP synthase from Clostridium acetobutylicum (strain ATCC 824 / DSM 792 / JCM 1419 / IAM 19013 / LMG 5710 / NBRC 13948 / NRRL B-527 / VKM B-1787 / 2291 / W).